The sequence spans 314 residues: Nerylneryl diphosphate synthase CPT2, chloroplastic (314 aa).

Residues 1 to 61 constitute a chloroplast transit peptide; that stretch reads MNSSIVSQHF…MSDRGLSKIS (61 aa). Asp97 is an active-site residue.

It belongs to the UPP synthase family. Mg(2+) is required as a cofactor. As to expression, expressed in stems. Expressed in petiolules. Expressed at low levels in leaf trichomes, old leaf and roots.

Its subcellular location is the plastid. It is found in the chloroplast. It catalyses the reaction 3 isopentenyl diphosphate + dimethylallyl diphosphate = nerylneryl diphosphate + 3 diphosphate. The catalysed reaction is isopentenyl diphosphate + dimethylallyl diphosphate = neryl diphosphate + diphosphate. It carries out the reaction neryl diphosphate + isopentenyl diphosphate = (2Z,6Z)-farnesyl diphosphate + diphosphate. The enzyme catalyses (2Z,6Z)-farnesyl diphosphate + isopentenyl diphosphate = nerylneryl diphosphate + diphosphate. Its function is as follows. Uses dimethylallyl diphosphate and isopentenyl diphosphate to catalyze the cis-prenyl chain elongation and produce the 20 carbon product nerylneryl diphosphate. This Solanum lycopersicum (Tomato) protein is Nerylneryl diphosphate synthase CPT2, chloroplastic.